The primary structure comprises 247 residues: DNA repair protein RecO (247 aa).

Belongs to the RecO family.

Functionally, involved in DNA repair and RecF pathway recombination. This chain is DNA repair protein RecO, found in Caldanaerobacter subterraneus subsp. tengcongensis (strain DSM 15242 / JCM 11007 / NBRC 100824 / MB4) (Thermoanaerobacter tengcongensis).